The following is a 512-amino-acid chain: Protein maelstrom homolog (512 aa).

The segment at residues 9 to 75 is a DNA-binding region (HMG box); that stretch reads AKGPFYFFMM…NPKEAGGYGE (67 aa). Disordered stretches follow at residues 49 to 72, 360 to 421, and 439 to 465; these read APHE…EAGG, RMSK…GTRA, and QSAN…DPQS. Positions 360 to 370 are enriched in polar residues; it reads RMSKLTTTSDN. The segment covering 379–388 has biased composition (basic and acidic residues); that stretch reads RSTDRTDRDV. 2 stretches are compositionally biased toward polar residues: residues 393 to 421 and 439 to 449; these read IYSS…GTRA and QSANRSPTKKN. The segment covering 451 to 464 has biased composition (basic and acidic residues); the sequence is WSRENKLTEVRDPQ.

Belongs to the maelstrom family.

The protein localises to the cytoplasm. It localises to the nucleus. Its function is as follows. Plays a central role during gametogenesis by repressing transposable elements and preventing their mobilization, which is essential for the germline integrity. Probably acts via the piRNA metabolic process, which mediates the repression of transposable elements during meiosis by forming complexes composed of piRNAs and Piwi proteins and governs the repression of transposons. The chain is Protein maelstrom homolog (mael) from Culex quinquefasciatus (Southern house mosquito).